Consider the following 253-residue polypeptide: MRYLKRITIYISLLILVSGCGNSKEAEIKQNFNKTLSMYPIKNLENFYDKEGYRDEEFDKKDKGTWIVHSEMTIEPKGKSMETRGMVLYINRNTRTTKGYYFINEITDDSNGRPKDDEKRYPVKMEHNKIIPTKPIPNDKLKKEIENFKFFVQYANFKDINDYKNGDISYNPNVPSYSAKYQLNNNDYNVKQLRKRYDIPTKQAPKLLLKGDGDLKGSSVGSKNLEFTFVENKEENIFFTDAVQFTPSENDES.

The first 19 residues, 1–19, serve as a signal peptide directing secretion; that stretch reads MRYLKRITIYISLLILVSG. The N-palmitoyl cysteine moiety is linked to residue C20. C20 carries the S-diacylglycerol cysteine lipid modification.

Belongs to the staphylococcal tandem lipoprotein family.

The protein localises to the cell membrane. This is an uncharacterized protein from Staphylococcus epidermidis (strain ATCC 12228 / FDA PCI 1200).